We begin with the raw amino-acid sequence, 201 residues long: Peptidyl-tRNA hydrolase (201 aa).

TRNA is bound at residue Tyr-14. His-19 functions as the Proton acceptor in the catalytic mechanism. TRNA-binding residues include Tyr-64, Asn-66, and Asn-113. The segment at Pro-178–Lys-201 is disordered.

It belongs to the PTH family. Monomer.

It is found in the cytoplasm. The enzyme catalyses an N-acyl-L-alpha-aminoacyl-tRNA + H2O = an N-acyl-L-amino acid + a tRNA + H(+). Functionally, hydrolyzes ribosome-free peptidyl-tRNAs (with 1 or more amino acids incorporated), which drop off the ribosome during protein synthesis, or as a result of ribosome stalling. Catalyzes the release of premature peptidyl moieties from peptidyl-tRNA molecules trapped in stalled 50S ribosomal subunits, and thus maintains levels of free tRNAs and 50S ribosomes. The sequence is that of Peptidyl-tRNA hydrolase from Koribacter versatilis (strain Ellin345).